We begin with the raw amino-acid sequence, 389 residues long: Aspartate aminotransferase (389 aa).

2 residues coordinate L-aspartate: glycine 34 and asparagine 171. Lysine 233 is modified (N6-(pyridoxal phosphate)lysine). Residue arginine 362 participates in L-aspartate binding.

It belongs to the class-I pyridoxal-phosphate-dependent aminotransferase family. Homodimer. It depends on pyridoxal 5'-phosphate as a cofactor.

It localises to the cytoplasm. It carries out the reaction L-aspartate + 2-oxoglutarate = oxaloacetate + L-glutamate. This Pyrococcus abyssi (strain GE5 / Orsay) protein is Aspartate aminotransferase (aspC).